Consider the following 263-residue polypeptide: S-methyl-5'-thioadenosine phosphorylase (263 aa).

Residues threonine 13, 55 to 56 (RH), and 88 to 89 (SA) contribute to the phosphate site. Residue methionine 186 participates in substrate binding. Threonine 187 contributes to the phosphate binding site. 210–212 (DYD) contacts substrate.

Belongs to the PNP/MTAP phosphorylase family. MTAP subfamily. In terms of assembly, homohexamer. Dimer of a homotrimer.

The catalysed reaction is S-methyl-5'-thioadenosine + phosphate = 5-(methylsulfanyl)-alpha-D-ribose 1-phosphate + adenine. It functions in the pathway amino-acid biosynthesis; L-methionine biosynthesis via salvage pathway; S-methyl-5-thio-alpha-D-ribose 1-phosphate from S-methyl-5'-thioadenosine (phosphorylase route): step 1/1. Catalyzes the reversible phosphorylation of S-methyl-5'-thioadenosine (MTA) to adenine and 5-methylthioribose-1-phosphate. Involved in the breakdown of MTA, a major by-product of polyamine biosynthesis. Responsible for the first step in the methionine salvage pathway after MTA has been generated from S-adenosylmethionine. Has broad substrate specificity with 6-aminopurine nucleosides as preferred substrates. This is S-methyl-5'-thioadenosine phosphorylase from Nitrosopumilus maritimus (strain SCM1).